Here is a 101-residue protein sequence, read N- to C-terminus: Osteocalcin (101 aa).

The first 18 residues, 1-18 (MKLAIVLLLLGLAVLCLG), serve as a signal peptide directing secretion. Residues 19 to 52 (GKDSQHSASAGDSRSSEAFISRQDSANFARRHKR) constitute a propeptide that is removed on maturation. Positions 53–99 (SYRYNVARGAAVTSPLESQREVCELNPDCDELADHIGFQEAYRRFYG) constitute a Gla domain. Ca(2+) is bound by residues Glu69, Glu73, Glu76, and Asp82. A 4-carboxyglutamate mark is found at Glu69, Glu73, and Glu76. Cysteines 75 and 81 form a disulfide.

It belongs to the osteocalcin/matrix Gla protein family. Post-translationally, gamma-carboxyglutamate residues are formed by vitamin K dependent carboxylation by GGCX. These residues are essential for the binding of calcium.

The protein localises to the secreted. In terms of biological role, the carboxylated form is one of the main organic components of the bone matrix, which constitutes 1-2% of the total bone protein. The carboxylated form binds strongly to apatite and calcium. This is Osteocalcin (bglap) from Xenopus tropicalis (Western clawed frog).